Consider the following 345-residue polypeptide: Alpha-2-HS-glycoprotein (345 aa).

An N-terminal signal peptide occupies residues 1 to 18; sequence MKSLVLLLCFAQLWGCQS. The Cystatin fetuin-A-type 1 domain maps to 19-133; sequence APQGTGLGFR…QFRVMHTQCH (115 aa). 6 disulfide bridges follow: Cys32-Cys336, Cys89-Cys100, Cys114-Cys132, Cys146-Cys149, Cys208-Cys219, and Cys230-Cys247. N-linked (GlcNAc...) asparagine glycosylation is present at Asn99. Phosphoserine is present on Ser134. Thr135 carries the post-translational modification Phosphothreonine. Ser138 carries the phosphoserine modification. The Cystatin fetuin-A-type 2 domain maps to 144–250; that stretch reads KLCPRCPLLT…EEVSVACKLF (107 aa). Residues Asn156 and Asn176 are each glycosylated (N-linked (GlcNAc...) asparagine). Residues Ser305, Ser309, Ser312, and Ser314 each carry the phosphoserine modification. A disordered region spans residues 312–334; that stretch reads SASGETLHSPKVGQPGAAGPVSP.

The protein belongs to the fetuin family. Post-translationally, phosphorylated by FAM20C in the extracellular medium. Liver is the major site of synthesis, but fetuin is also expressed in limb buds and other extrahepatic tissues during development.

Its subcellular location is the secreted. Functionally, probably involved in differentiation. In terms of biological role, (Microbial infection) Facilitates invasion of hepatocytes by Plasmodium berghei sporozoites. This Mus musculus (Mouse) protein is Alpha-2-HS-glycoprotein (Ahsg).